Reading from the N-terminus, the 359-residue chain is Aminomethyltransferase (359 aa).

Belongs to the GcvT family. As to quaternary structure, the glycine cleavage system is composed of four proteins: P, T, L and H.

It carries out the reaction N(6)-[(R)-S(8)-aminomethyldihydrolipoyl]-L-lysyl-[protein] + (6S)-5,6,7,8-tetrahydrofolate = N(6)-[(R)-dihydrolipoyl]-L-lysyl-[protein] + (6R)-5,10-methylene-5,6,7,8-tetrahydrofolate + NH4(+). The glycine cleavage system catalyzes the degradation of glycine. The protein is Aminomethyltransferase of Alcanivorax borkumensis (strain ATCC 700651 / DSM 11573 / NCIMB 13689 / SK2).